Reading from the N-terminus, the 237-residue chain is Uridylate kinase (237 aa).

12–15 (KLSG) is an ATP binding site. The interval 20 to 25 (GEDGLG) is involved in allosteric activation by GTP. Glycine 54 contacts UMP. 2 residues coordinate ATP: glycine 55 and arginine 59. UMP contacts are provided by residues aspartate 74 and 135-142 (TGNPFFTT). Residues threonine 162, tyrosine 168, and aspartate 171 each contribute to the ATP site.

It belongs to the UMP kinase family. Homohexamer.

The protein localises to the cytoplasm. It catalyses the reaction UMP + ATP = UDP + ADP. It participates in pyrimidine metabolism; CTP biosynthesis via de novo pathway; UDP from UMP (UMPK route): step 1/1. Allosterically activated by GTP. Inhibited by UTP. Catalyzes the reversible phosphorylation of UMP to UDP. The polypeptide is Uridylate kinase (Haemophilus influenzae (strain PittGG)).